The sequence spans 1625 residues: E3 ubiquitin-protein ligase KEG (1625 aa).

Residues 10-56 (CSVCHTRYNEDERVPLLLQCGHGFCKDCLSKMFSTSSDTTLTCPRCR) form an RING-type zinc finger. Over residues 91 to 106 (YTDDEDDDDEEDGSDE) the composition is skewed to acidic residues. The disordered stretch occupies residues 91 to 110 (YTDDEDDDDEEDGSDEDGAR). The 287-residue stretch at 141–427 (RQIGEESSSG…TFNAMLATFL (287 aa)) folds into the Protein kinase domain. ATP is bound by residues 147-155 (SSSGGFGGV) and Lys-176. 11 ANK repeats span residues 467–496 (DNPN…AGGG), 510–540 (DGQS…NVDI), 544–573 (DGDP…NVRS), 579–608 (SGPS…DPNA), 612–641 (EGET…SRSM), 647–676 (KCLT…PEEI), 685–720 (PVGT…DPTA), 725–754 (HGRT…NANI), 758–787 (HNTI…DCNI), 791–826 (EGDN…AVDV), and 832–863 (KTVR…HLSP).

In terms of assembly, interacts with ABI5 and EDR1. Post-translationally, autophosphotylated and autoubiquitinated in vitro. Phosphorylation enhances self-ubiquitination. In terms of processing, autoubiquitinated in response to abscisic acid (ABA) and subsequently targeted to proteolysis. Expressed in all tissues of young seedlings. In flowering plants, only detected in the youngest part of the stem, anthers and the receptacle of immature siliques. Not found in mature leave, older parts of the stem, flower parts other than anthers or mature siliques.

Its subcellular location is the golgi apparatus. The protein resides in the trans-Golgi network. The protein localises to the early endosome. The enzyme catalyses L-seryl-[protein] + ATP = O-phospho-L-seryl-[protein] + ADP + H(+). The catalysed reaction is L-threonyl-[protein] + ATP = O-phospho-L-threonyl-[protein] + ADP + H(+). It catalyses the reaction S-ubiquitinyl-[E2 ubiquitin-conjugating enzyme]-L-cysteine + [acceptor protein]-L-lysine = [E2 ubiquitin-conjugating enzyme]-L-cysteine + N(6)-ubiquitinyl-[acceptor protein]-L-lysine.. The protein operates within protein modification; protein ubiquitination. Mediates E2-dependent protein ubiquitination. Acts as a negative regulator of abscisic acid signaling. Required for ABI5 degradation, by mediating its ubiquitination. Together with EDR1, may regulate endocytic trafficking and/or the formation of signaling complexes on trans-Golgi network (TGN)/ early endosome (EE) vesicles during stress responses. The chain is E3 ubiquitin-protein ligase KEG (KEG) from Arabidopsis thaliana (Mouse-ear cress).